Consider the following 2462-residue polypeptide: Non-reducing polyketide synthase ausA (2462 aa).

The N-terminal acylcarrier protein transacylase domain (SAT) stretch occupies residues 16 to 253 (VFFGPVYPEL…HTADHIPAMK (238 aa)). The Ketosynthase family 3 (KS3) domain maps to 385–801 (SAPIAVTGFA…GSNAVIVVKE (417 aa)). Active-site for beta-ketoacyl synthase activity residues include Cys-550, His-685, and His-724. The malonyl-CoA:ACP transacylase (MAT) domain stretch occupies residues 904-1208 (LCFGGQTGDT…LPIDLQESTA (305 aa)). Ser-991 functions as the For acyl/malonyl transferase activity in the catalytic mechanism. The N-terminal hotdog fold stretch occupies residues 1274 to 1403 (HDDGLLQLVE…GKVLLDPQAA (130 aa)). Residues 1274–1581 (HDDGLLQLVE…FTSVSIQSLK (308 aa)) form the PKS/mFAS DH domain. The segment at 1277–1580 (GLLQLVERDA…TFTSVSIQSL (304 aa)) is product template (PT) domain. The active-site Proton acceptor; for dehydratase activity is His-1307. The tract at residues 1431 to 1581 (SSNGLKRATV…FTSVSIQSLK (151 aa)) is C-terminal hotdog fold. Asp-1489 acts as the Proton donor; for dehydratase activity in catalysis. One can recognise a Carrier domain in the interval 1613-1690 (VSDDHHLRAV…GLAHRISPSS (78 aa)). Ser-1650 carries the post-translational modification O-(pantetheine 4'-phosphoryl)serine. Residues 1850–2083 (QHASEHKLLR…GFNWVDWTDN (234 aa)) are methyltransferase (CMeT) domain. The thioesterase (TE) domain stretch occupies residues 2112–2462 (TPARVETVRY…YEFLRQHVAV (351 aa)). Active-site for thioesterase activity residues include Ser-2235, Asp-2398, and His-2430.

It catalyses the reaction 3 malonyl-CoA + acetyl-CoA + 2 S-adenosyl-L-methionine = 3,5-dimethylorsellinate + 2 S-adenosyl-L-homocysteine + 3 CO2 + 4 CoA. It functions in the pathway secondary metabolite biosynthesis; terpenoid biosynthesis. Functionally, non-reducing polyketide synthase; part of the gene cluster that mediates the biosynthesis of calidodehydroaustin, a fungal meroterpenoid. The first step of the pathway is the synthesis of 3,5-dimethylorsellinic acid by the polyketide synthase ausA. 3,5-dimethylorsellinic acid is then prenylated by the polyprenyl transferase ausN. Further epoxidation by the FAD-dependent monooxygenase ausM and cyclization by the probable terpene cyclase ausL lead to the formation of protoaustinoid A. Protoaustinoid A is then oxidized to spiro-lactone preaustinoid A3 by the combined action of the FAD-binding monooxygenases ausB and ausC, and the dioxygenase ausE. Acid-catalyzed keto-rearrangement and ring contraction of the tetraketide portion of preaustinoid A3 by ausJ lead to the formation of preaustinoid A4. The aldo-keto reductase ausK, with the help of ausH, is involved in the next step by transforming preaustinoid A4 into isoaustinone which is in turn hydroxylated by the P450 monooxygenase ausI to form austinolide. The cytochrome P450 monooxygenase ausG modifies austinolide to austinol. Austinol is further acetylated to austin by the O-acetyltransferase ausP, which spontaneously changes to dehydroaustin. The cytochrome P450 monooxygenase ausR then converts dehydroaustin is into 7-dehydrodehydroaustin. The hydroxylation catalyzed by ausR permits the O-acetyltransferase ausQ to add an additional acetyl group to the molecule, leading to the formation of acetoxydehydroaustin. The short chain dehydrogenase ausT catalyzes the reduction of the double bond present between carbon atoms 1 and 2 to convert 7-dehydrodehydroaustin into 1,2-dihydro-7-hydroxydehydroaustin. AusQ catalyzes not only an acetylation reaction but also the addition of the PKS ausV diketide product to 1,2-dihydro-7-hydroxydehydroaustin, forming precalidodehydroaustin. Finally, the iron/alpha-ketoglutarate-dependent dioxygenase converts precalidodehydroaustin into calidodehydroaustin. The sequence is that of Non-reducing polyketide synthase ausA from Aspergillus calidoustus.